The chain runs to 322 residues: Ribonucleoside-diphosphate reductase small subunit (322 aa).

Fe cation contacts are provided by Asp-70, Glu-101, and His-104. Residue Tyr-108 is part of the active site. Residues Glu-163, Glu-197, and His-200 each contribute to the Fe cation site.

The protein belongs to the ribonucleoside diphosphate reductase small chain family. In terms of assembly, heterodimer of a large and a small subunit. Fe cation is required as a cofactor.

The enzyme catalyses a 2'-deoxyribonucleoside 5'-diphosphate + [thioredoxin]-disulfide + H2O = a ribonucleoside 5'-diphosphate + [thioredoxin]-dithiol. Functionally, provides the precursors necessary for DNA synthesis. Catalyzes the biosynthesis of deoxyribonucleotides from the corresponding ribonucleotides. In Plasmodium falciparum (isolate FCR-3 / Gambia), this protein is Ribonucleoside-diphosphate reductase small subunit (RNR2).